The following is a 261-amino-acid chain: Imidazole glycerol phosphate synthase subunit HisF (261 aa).

Catalysis depends on residues Asp-16 and Asp-135.

The protein belongs to the HisA/HisF family. As to quaternary structure, heterodimer of HisH and HisF.

It is found in the cytoplasm. The catalysed reaction is 5-[(5-phospho-1-deoxy-D-ribulos-1-ylimino)methylamino]-1-(5-phospho-beta-D-ribosyl)imidazole-4-carboxamide + L-glutamine = D-erythro-1-(imidazol-4-yl)glycerol 3-phosphate + 5-amino-1-(5-phospho-beta-D-ribosyl)imidazole-4-carboxamide + L-glutamate + H(+). The protein operates within amino-acid biosynthesis; L-histidine biosynthesis; L-histidine from 5-phospho-alpha-D-ribose 1-diphosphate: step 5/9. IGPS catalyzes the conversion of PRFAR and glutamine to IGP, AICAR and glutamate. The HisF subunit catalyzes the cyclization activity that produces IGP and AICAR from PRFAR using the ammonia provided by the HisH subunit. This is Imidazole glycerol phosphate synthase subunit HisF from Mycobacterium ulcerans (strain Agy99).